Reading from the N-terminus, the 564-residue chain is Formate--tetrahydrofolate ligase (564 aa).

65-72 (TPLGEGKT) contributes to the ATP binding site.

It belongs to the formate--tetrahydrofolate ligase family.

It catalyses the reaction (6S)-5,6,7,8-tetrahydrofolate + formate + ATP = (6R)-10-formyltetrahydrofolate + ADP + phosphate. It functions in the pathway one-carbon metabolism; tetrahydrofolate interconversion. The protein is Formate--tetrahydrofolate ligase of Roseiflexus sp. (strain RS-1).